We begin with the raw amino-acid sequence, 612 residues long: T-cell immunomodulatory protein (612 aa).

A signal peptide spans 1-33; the sequence is MAAAGRLPSSWALFSPLLAGLALLGVGPVPARA. N36, N95, N139, N146, N151, N176, N188, N226, and N243 each carry an N-linked (GlcNAc...) asparagine glycan. The FG-GAP; atypical repeat unit spans residues 258-293; it reads VVGQSAFADFDGDGHMDHLLPGCEDKNCQKSTIYLV. 3 N-linked (GlcNAc...) asparagine glycosylation sites follow: N353, N371, and N482. A helical membrane pass occupies residues 567–587; the sequence is VLLTAIALIGVCVFILAIIGI.

It belongs to the TIP family. As to quaternary structure, interacts with RUVBL1, RUVBL2 and alpha-tubulin. As to expression, ubiquitously expressed.

The protein localises to the secreted. The protein resides in the membrane. In terms of biological role, modulator of T-cell function. Has a protective effect in graft versus host disease model. The chain is T-cell immunomodulatory protein from Homo sapiens (Human).